Here is a 340-residue protein sequence, read N- to C-terminus: Holliday junction branch migration complex subunit RuvB (340 aa).

Residues 1 to 183 (MKRDDLVSPE…FGISFRLDYY (183 aa)) form a large ATPase domain (RuvB-L) region. ATP contacts are provided by residues L22, R23, G64, K67, T68, T69, 130 to 132 (EDF), R173, Y183, and R220. T68 lines the Mg(2+) pocket. The tract at residues 184–254 (AVEELTKIIN…VAVHALEMLE (71 aa)) is small ATPAse domain (RuvB-S). The tract at residues 257–340 (DRGFDQMDRS…KFEVGQKELF (84 aa)) is head domain (RuvB-H). DNA-binding residues include K312 and R317.

It belongs to the RuvB family. As to quaternary structure, homohexamer. Forms an RuvA(8)-RuvB(12)-Holliday junction (HJ) complex. HJ DNA is sandwiched between 2 RuvA tetramers; dsDNA enters through RuvA and exits via RuvB. An RuvB hexamer assembles on each DNA strand where it exits the tetramer. Each RuvB hexamer is contacted by two RuvA subunits (via domain III) on 2 adjacent RuvB subunits; this complex drives branch migration. In the full resolvosome a probable DNA-RuvA(4)-RuvB(12)-RuvC(2) complex forms which resolves the HJ.

Its subcellular location is the cytoplasm. It carries out the reaction ATP + H2O = ADP + phosphate + H(+). In terms of biological role, the RuvA-RuvB-RuvC complex processes Holliday junction (HJ) DNA during genetic recombination and DNA repair, while the RuvA-RuvB complex plays an important role in the rescue of blocked DNA replication forks via replication fork reversal (RFR). RuvA specifically binds to HJ cruciform DNA, conferring on it an open structure. The RuvB hexamer acts as an ATP-dependent pump, pulling dsDNA into and through the RuvAB complex. RuvB forms 2 homohexamers on either side of HJ DNA bound by 1 or 2 RuvA tetramers; 4 subunits per hexamer contact DNA at a time. Coordinated motions by a converter formed by DNA-disengaged RuvB subunits stimulates ATP hydrolysis and nucleotide exchange. Immobilization of the converter enables RuvB to convert the ATP-contained energy into a lever motion, pulling 2 nucleotides of DNA out of the RuvA tetramer per ATP hydrolyzed, thus driving DNA branch migration. The RuvB motors rotate together with the DNA substrate, which together with the progressing nucleotide cycle form the mechanistic basis for DNA recombination by continuous HJ branch migration. Branch migration allows RuvC to scan DNA until it finds its consensus sequence, where it cleaves and resolves cruciform DNA. The chain is Holliday junction branch migration complex subunit RuvB from Syntrophus aciditrophicus (strain SB).